We begin with the raw amino-acid sequence, 569 residues long: Glucose-6-phosphate isomerase, cytosolic 2A (569 aa).

The active-site Proton donor is the E360. Active-site residues include H391 and K516.

Belongs to the GPI family. As to quaternary structure, homodimer.

It is found in the cytoplasm. The enzyme catalyses alpha-D-glucose 6-phosphate = beta-D-fructose 6-phosphate. The protein operates within carbohydrate degradation; glycolysis; D-glyceraldehyde 3-phosphate and glycerone phosphate from D-glucose: step 2/4. This chain is Glucose-6-phosphate isomerase, cytosolic 2A (PGIC2-A), found in Clarkia lewisii (Farewell-to-spring).